The chain runs to 106 residues: Large ribosomal subunit protein uL24 (106 aa).

The protein belongs to the universal ribosomal protein uL24 family. In terms of assembly, part of the 50S ribosomal subunit.

Functionally, one of two assembly initiator proteins, it binds directly to the 5'-end of the 23S rRNA, where it nucleates assembly of the 50S subunit. One of the proteins that surrounds the polypeptide exit tunnel on the outside of the subunit. The polypeptide is Large ribosomal subunit protein uL24 (Azobacteroides pseudotrichonymphae genomovar. CFP2).